The following is a 222-amino-acid chain: Triosephosphate isomerase (222 aa).

9 to 11 is a substrate binding site; sequence NYK. The active-site Electrophile is the H93. E141 serves as the catalytic Proton acceptor. Substrate contacts are provided by residues I146, G181, and 202-203; that span reads AS.

Belongs to the triosephosphate isomerase family. As to quaternary structure, homotetramer; dimer of dimers.

It localises to the cytoplasm. The enzyme catalyses D-glyceraldehyde 3-phosphate = dihydroxyacetone phosphate. Its pathway is carbohydrate biosynthesis; gluconeogenesis. The protein operates within carbohydrate degradation; glycolysis; D-glyceraldehyde 3-phosphate from glycerone phosphate: step 1/1. Functionally, involved in the gluconeogenesis. Catalyzes stereospecifically the conversion of dihydroxyacetone phosphate (DHAP) to D-glyceraldehyde-3-phosphate (G3P). In Methanosarcina acetivorans (strain ATCC 35395 / DSM 2834 / JCM 12185 / C2A), this protein is Triosephosphate isomerase.